We begin with the raw amino-acid sequence, 128 residues long: Glycine cleavage system H protein (128 aa).

Residues 24-105 (SLTIGVTDHA…AYAAWLFKLK (82 aa)) form the Lipoyl-binding domain. Residue K65 is modified to N6-lipoyllysine.

The protein belongs to the GcvH family. In terms of assembly, the glycine cleavage system is composed of four proteins: P, T, L and H. It depends on (R)-lipoate as a cofactor.

Its function is as follows. The glycine cleavage system catalyzes the degradation of glycine. The H protein shuttles the methylamine group of glycine from the P protein to the T protein. The protein is Glycine cleavage system H protein of Aromatoleum aromaticum (strain DSM 19018 / LMG 30748 / EbN1) (Azoarcus sp. (strain EbN1)).